Reading from the N-terminus, the 305-residue chain is Serine/threonine-protein phosphatase ppe1 (305 aa).

Positions 51, 53, 79, and 111 each coordinate Mn(2+). The Proton donor role is filled by H112. H161 and H235 together coordinate Mn(2+).

It belongs to the PPP phosphatase family. PP-6 (PP-V) subfamily. As to quaternary structure, interacts with sts5, ekc1 and mis12. The cofactor is Mn(2+).

The protein localises to the nucleus. The catalysed reaction is O-phospho-L-seryl-[protein] + H2O = L-seryl-[protein] + phosphate. It catalyses the reaction O-phospho-L-threonyl-[protein] + H2O = L-threonyl-[protein] + phosphate. Has a role in chromosome segregation. May provide a dynamic connection between kinetochore microtubules and kinetochore chromatin. Negatively regulates mis12. The chain is Serine/threonine-protein phosphatase ppe1 (ppe1) from Schizosaccharomyces pombe (strain 972 / ATCC 24843) (Fission yeast).